The chain runs to 310 residues: Eukaryotic translation initiation factor 3 subunit G (310 aa).

Disordered stretches follow at residues 1 to 32 (MPTEDYDSKPSWADQVEEEGIDPEPISPPVTK) and 179 to 229 (TGDK…DDNA). Residues 187 to 196 (GAEPEPAQAP) are compositionally biased toward low complexity. Basic and acidic residues predominate over residues 211–229 (GGSRRGESMQPNRRADDNA). Residues 229–307 (ATIRVTNLSE…LILNVEWAKP (79 aa)) enclose the RRM domain.

The protein belongs to the eIF-3 subunit G family. In terms of assembly, component of the eukaryotic translation initiation factor 3 (eIF-3) complex, which is composed of 13 subunits: eif3a, eif3b, eif3c, eif3d, eif3e, eif3f, eif3g, eif3h, eif3i, eif3j, eif3k, eif3l and eif3m.

It localises to the cytoplasm. Functionally, RNA-binding component of the eukaryotic translation initiation factor 3 (eIF-3) complex, which is involved in protein synthesis of a specialized repertoire of mRNAs and, together with other initiation factors, stimulates binding of mRNA and methionyl-tRNAi to the 40S ribosome. The eIF-3 complex specifically targets and initiates translation of a subset of mRNAs involved in cell proliferation. This subunit can bind 18S rRNA. The chain is Eukaryotic translation initiation factor 3 subunit G (eif3g) from Xenopus tropicalis (Western clawed frog).